Consider the following 398-residue polypeptide: Acetate kinase (398 aa).

Asparagine 8 contributes to the Mg(2+) binding site. An ATP-binding site is contributed by lysine 15. Arginine 89 contributes to the substrate binding site. The active-site Proton donor/acceptor is aspartate 146. ATP-binding positions include 206–210 (HIGNG), 283–285 (DMR), and 331–335 (GMGEN). Position 383 (glutamate 383) interacts with Mg(2+).

It belongs to the acetokinase family. In terms of assembly, homodimer. Mg(2+) serves as cofactor. Mn(2+) is required as a cofactor.

Its subcellular location is the cytoplasm. The enzyme catalyses acetate + ATP = acetyl phosphate + ADP. It participates in metabolic intermediate biosynthesis; acetyl-CoA biosynthesis; acetyl-CoA from acetate: step 1/2. Catalyzes the formation of acetyl phosphate from acetate and ATP. Can also catalyze the reverse reaction. This Streptococcus pyogenes serotype M1 protein is Acetate kinase.